Reading from the N-terminus, the 459-residue chain is Methionine aminopeptidase 2-1 (459 aa).

The span at 1-12 shows a compositional bias: basic and acidic residues; that stretch reads MGSKSPEDHRQG. Residues 1 to 79 are disordered; sequence MGSKSPEDHR…RKRNKKKSKK (79 aa). Acidic residues predominate over residues 43 to 54; the sequence is GQDEDGDDDDDE. The span at 67 to 79 shows a compositional bias: basic residues; it reads KKKRKRNKKKSKK. Histidine 210 provides a ligand contact to substrate. 3 residues coordinate a divalent metal cation: aspartate 231, aspartate 242, and histidine 311. Residue histidine 319 participates in substrate binding. Residues glutamate 344 and glutamate 440 each contribute to the a divalent metal cation site.

The protein belongs to the peptidase M24A family. Methionine aminopeptidase eukaryotic type 2 subfamily. The cofactor is Co(2+). Requires Zn(2+) as cofactor. Mn(2+) is required as a cofactor. It depends on Fe(2+) as a cofactor.

It localises to the cytoplasm. It carries out the reaction Release of N-terminal amino acids, preferentially methionine, from peptides and arylamides.. Its function is as follows. Cotranslationally removes the N-terminal methionine from nascent proteins. The N-terminal methionine is often cleaved when the second residue in the primary sequence is small and uncharged (Met-Ala-, Cys, Gly, Pro, Ser, Thr, or Val). The chain is Methionine aminopeptidase 2-1 from Pyrenophora tritici-repentis (strain Pt-1C-BFP) (Wheat tan spot fungus).